A 344-amino-acid polypeptide reads, in one-letter code: Ras association domain-containing protein 1 (344 aa).

At serine 2 the chain carries N-acetylserine. Phosphoserine is present on serine 2. Residues 2–119 (SGEPELIELR…DLGWEPAVER (118 aa)) form a mediates interaction with E4F1 region. Arginine 36 is subject to Omega-N-methylarginine. Residues 51 to 105 (GHRFQPAGPATHTWCDLCGDFIWGVVRKGLQCARLSADCKFTCHYRCRALVCLDC) form a Phorbol-ester/DAG-type zinc finger. Positions 179-189 (SVPSSKKPPSL) are enriched in low complexity. The tract at residues 179–203 (SVPSSKKPPSLQDARRGPGRGTSVR) is disordered. Residues 198–292 (RGTSVRRRTS…LSFVLKENDS (95 aa)) enclose the Ras-associating domain. The region spanning 294 to 341 (EVNWDAFSMPELHNFLRILQREEEEHLRQILQKYSYCRQKIQEALHAC) is the SARAH domain. The tract at residues 315–318 (EEEE) is MOAP1-binding.

Interacts with MAP1S. Interacts with XPA. Binds to the N-terminal of CDC20 during prometaphase. Binds to STK3/MST2 and STK4/MST1. Recruited to the TNFRSF1A and TNFRSF10A complexes in response to their respective cognate ligand, after internalization. Can self-associate. Part of a complex with MDM2, DAXX, RASSF1 and USP7. Interacts with ECM2. As to quaternary structure, interacts with MOAP1. Interacts with E4F1. Interacts with RSSF5 and probably associates with HRAS via a RSSF1 isoform A-RSSF5 heterodimer. Interacts (via C-terminus) with DAXX (via N-terminus); the interaction is independent of MDM2 and TP53. Interacts (via N-terminus) with MDM2 (via C-terminus); the interaction is independent of TP53. Interacts with RAB39A. Interacts with RAB39B; the interaction is weak. In terms of assembly, interacts (via N-terminus) with DAXX. Interacts with RAB39B; the interaction is strong. Does not interact with RAB39A. Interacts (via N-terminus) with DAXX. In terms of tissue distribution, isoform A and isoform C are ubiquitously expressed in all tissues tested, however isoform A is absent in many corresponding cancer cell lines. Isoform B is mainly expressed in hematopoietic cells.

The protein localises to the cytoplasm. It is found in the cytoskeleton. The protein resides in the microtubule organizing center. Its subcellular location is the centrosome. It localises to the spindle. The protein localises to the spindle pole. It is found in the nucleus. Potential tumor suppressor. Required for death receptor-dependent apoptosis. Mediates activation of STK3/MST2 and STK4/MST1 during Fas-induced apoptosis by preventing their dephosphorylation. When associated with MOAP1, promotes BAX conformational change and translocation to mitochondrial membranes in response to TNF and TNFSF10 stimulation. Isoform A interacts with CDC20, an activator of the anaphase-promoting complex, APC, resulting in the inhibition of APC activity and mitotic progression. Inhibits proliferation by negatively regulating cell cycle progression at the level of G1/S-phase transition by regulating accumulation of cyclin D1 protein. Isoform C has been shown not to perform these roles, no function has been identified for this isoform. Isoform A disrupts interactions among MDM2, DAXX and USP7, thus contributing to the efficient activation of TP53 by promoting MDM2 self-ubiquitination in cell-cycle checkpoint control in response to DNA damage. The sequence is that of Ras association domain-containing protein 1 from Homo sapiens (Human).